A 561-amino-acid chain; its full sequence is Transmembrane protein 209 (561 aa).

Ser9 and Ser11 each carry phosphoserine. The helical transmembrane segment at Val28–Thr48 threads the bilayer. N-linked (GlcNAc...) asparagine glycosylation occurs at Asn57. The helical transmembrane segment at Tyr60–Phe80 threads the bilayer. Ser98 carries the phosphoserine modification. Disordered stretches follow at residues Leu120–Thr156 and Ser196–Glu233. The segment covering Ser138–Pro152 has biased composition (low complexity). Residues Ser201 and Ser248 each carry the phosphoserine modification. The disordered stretch occupies residues Glu250 to Pro270. The span at Ser260–Pro270 shows a compositional bias: low complexity. Asn274 is a glycosylation site (N-linked (GlcNAc...) asparagine). Residue Ser278 is modified to Phosphoserine.

Interacts with NUP205.

The protein localises to the membrane. It is found in the nucleus envelope. Its subcellular location is the golgi apparatus. It localises to the cytoplasm. In terms of biological role, nuclear envelope protein which in association with NUP205, may be involved in nuclear transport of various nuclear proteins in addition to MYC. The polypeptide is Transmembrane protein 209 (Tmem209) (Rattus norvegicus (Rat)).